Consider the following 435-residue polypeptide: Enolase (435 aa).

2 residues coordinate substrate: His155 and Glu164. Glu205 acts as the Proton donor in catalysis. Residues Asp243, Glu292, and Asp319 each contribute to the Mg(2+) site. Substrate is bound by residues Glu292, Asp319, Lys344, 371-374 (SHRS), and Lys395. The active-site Proton acceptor is the Lys344.

The protein belongs to the enolase family. As to quaternary structure, homooctamer. Mg(2+) is required as a cofactor.

It localises to the cytoplasm. Its subcellular location is the secreted. The protein localises to the cell surface. It catalyses the reaction (2R)-2-phosphoglycerate = phosphoenolpyruvate + H2O. The protein operates within carbohydrate degradation; glycolysis; pyruvate from D-glyceraldehyde 3-phosphate: step 4/5. In terms of biological role, catalyzes the reversible conversion of 2-phosphoglycerate (2-PG) into phosphoenolpyruvate (PEP). It is essential for the degradation of carbohydrates via glycolysis. 'Moonlights' as a plasminogen receptor and plasmin activator. Binds host (human) plasminogen in vitro; enhances the activity of host tissue-specific plasminogen activator (tPA). This is Enolase from Streptococcus pyogenes serotype M1.